Consider the following 616-residue polypeptide: Dihydroxy-acid dehydratase (616 aa).

Asp81 serves as a coordination point for Mg(2+). A [2Fe-2S] cluster-binding site is contributed by Cys122. Mg(2+) is bound by residues Asp123 and Lys124. The residue at position 124 (Lys124) is an N6-carboxylysine. Cys195 contributes to the [2Fe-2S] cluster binding site. Glu491 contacts Mg(2+). The active-site Proton acceptor is the Ser517.

The protein belongs to the IlvD/Edd family. Homodimer. The cofactor is [2Fe-2S] cluster. It depends on Mg(2+) as a cofactor.

It carries out the reaction (2R)-2,3-dihydroxy-3-methylbutanoate = 3-methyl-2-oxobutanoate + H2O. The catalysed reaction is (2R,3R)-2,3-dihydroxy-3-methylpentanoate = (S)-3-methyl-2-oxopentanoate + H2O. The protein operates within amino-acid biosynthesis; L-isoleucine biosynthesis; L-isoleucine from 2-oxobutanoate: step 3/4. It functions in the pathway amino-acid biosynthesis; L-valine biosynthesis; L-valine from pyruvate: step 3/4. Functionally, functions in the biosynthesis of branched-chain amino acids. Catalyzes the dehydration of (2R,3R)-2,3-dihydroxy-3-methylpentanoate (2,3-dihydroxy-3-methylvalerate) into 2-oxo-3-methylpentanoate (2-oxo-3-methylvalerate) and of (2R)-2,3-dihydroxy-3-methylbutanoate (2,3-dihydroxyisovalerate) into 2-oxo-3-methylbutanoate (2-oxoisovalerate), the penultimate precursor to L-isoleucine and L-valine, respectively. The sequence is that of Dihydroxy-acid dehydratase from Yersinia pseudotuberculosis serotype O:3 (strain YPIII).